The primary structure comprises 175 residues: ATP synthase subunit b (175 aa).

A helical membrane pass occupies residues 14–34 (LSPNPGLIFWTTVSFVIVLLI).

Belongs to the ATPase B chain family. F-type ATPases have 2 components, F(1) - the catalytic core - and F(0) - the membrane proton channel. F(1) has five subunits: alpha(3), beta(3), gamma(1), delta(1), epsilon(1). F(0) has four main subunits: a(1), b(2) and c(10-14). The alpha and beta chains form an alternating ring which encloses part of the gamma chain. F(1) is attached to F(0) by a central stalk formed by the gamma and epsilon chains, while a peripheral stalk is formed by the delta and b chains.

Its subcellular location is the cell inner membrane. F(1)F(0) ATP synthase produces ATP from ADP in the presence of a proton or sodium gradient. F-type ATPases consist of two structural domains, F(1) containing the extramembraneous catalytic core and F(0) containing the membrane proton channel, linked together by a central stalk and a peripheral stalk. During catalysis, ATP synthesis in the catalytic domain of F(1) is coupled via a rotary mechanism of the central stalk subunits to proton translocation. Functionally, component of the F(0) channel, it forms part of the peripheral stalk, linking F(1) to F(0). This chain is ATP synthase subunit b, found in Chlorobium phaeobacteroides (strain DSM 266 / SMG 266 / 2430).